A 1887-amino-acid chain; its full sequence is ATP-dependent DNA helicase tlh1 (1887 aa).

Over residues 329-347 (NQQRREQQDKGENKKRQDD) the composition is skewed to basic and acidic residues. Disordered regions lie at residues 329–372 (NQQR…EEEE), 504–552 (ERKE…NTDD), and 1110–1135 (MVEG…EMTQ). 2 stretches are compositionally biased toward acidic residues: residues 360–372 (LEDD…EEEE) and 524–533 (SAEDDNDNDN). Residues 540 to 549 (NNNNNNNNTN) show a composition bias toward low complexity. The segment covering 1112–1131 (EGDKEKDKTNEEKNKDEVKA) has biased composition (basic and acidic residues). Residues 1200 to 1375 (YFSLLNRMNL…RQTFCTNFYV (176 aa)) enclose the Helicase ATP-binding domain. ATP contacts are provided by residues 1213–1220 (LPTGGGKS) and 1240–1247 (MNMVTLVL). The short motif at 1322-1325 (DEAH) is the DEAH box element. The Helicase C-terminal domain occupies 1401-1559 (DLRTLMKRTK…CVRSFLASEM (159 aa)). Positions 1613–1643 (YNASFSSSPPPQPGNSSGMSAMNTNTTSTTP) are disordered. Over residues 1626–1642 (GNSSGMSAMNTNTTSTT) the composition is skewed to low complexity. A CCHC-type zinc finger spans residues 1804–1821 (STCYKCGKADHNLRECKL).

Belongs to the helicase family. RecQ subfamily.

It catalyses the reaction Couples ATP hydrolysis with the unwinding of duplex DNA by translocating in the 3'-5' direction.. The enzyme catalyses ATP + H2O = ADP + phosphate + H(+). In terms of biological role, a probable ATP-dependent 3'-5' DNA helicase. Has a role in telomerase-independent telomere maintenance. In Schizosaccharomyces pombe (strain 972 / ATCC 24843) (Fission yeast), this protein is ATP-dependent DNA helicase tlh1.